A 179-amino-acid polypeptide reads, in one-letter code: Inner membrane-spanning protein YciB (179 aa).

6 helical membrane passes run 3 to 23 (FLFD…ADIY), 24 to 44 (TATA…WFRH), 49 to 69 (PMQW…LVLH), 76 to 96 (WKPT…VLVW), 121 to 141 (LAWA…AYQF), and 149 to 169 (FKLF…SVWL).

Belongs to the YciB family.

The protein resides in the cell inner membrane. Functionally, plays a role in cell envelope biogenesis, maintenance of cell envelope integrity and membrane homeostasis. This chain is Inner membrane-spanning protein YciB, found in Cupriavidus taiwanensis (strain DSM 17343 / BCRC 17206 / CCUG 44338 / CIP 107171 / LMG 19424 / R1) (Ralstonia taiwanensis (strain LMG 19424)).